Consider the following 258-residue polypeptide: Global transcriptional regulator CodY (258 aa).

The GAF domain stretch occupies residues methionine 1 to leucine 156. A DNA-binding region (H-T-H motif) is located at residues alanine 204–arginine 223.

The protein belongs to the CodY family.

It is found in the cytoplasm. In terms of biological role, DNA-binding global transcriptional regulator which is involved in the adaptive response to starvation and acts by directly or indirectly controlling the expression of numerous genes in response to nutrient availability. During rapid exponential growth, CodY is highly active and represses genes whose products allow adaptation to nutrient depletion. This is Global transcriptional regulator CodY from Clostridium botulinum (strain Okra / Type B1).